Reading from the N-terminus, the 881-residue chain is NACHT, LRR and PYD domains-containing protein 6 (881 aa).

Residues 1 to 129 (MDAAGASCSS…EHVLRQHAKV (129 aa)) form the Pyrin domain. Position 104 is a phosphoserine (Ser-104). The disordered stretch occupies residues 154-175 (AGEDELLGTSGEPEPERARRSD). The 317-residue stretch at 194-510 (LTVVLQGPAG…EFLAALSYLL (317 aa)) folds into the NACHT domain. 200-207 (GPAGIGKT) contributes to the ATP binding site. An LRR 1 repeat occupies 459-484 (EKDLERLKLQGSQVQTMFLSKKELPG). Residues 579-611 (QSQPKVATVGAEKKDELKDEEAEEEEEEEEEEE) form a disordered region. A compositionally biased stretch (acidic residues) spans 596 to 611 (KDEEAEEEEEEEEEEE). LRR repeat units lie at residues 637–660 (LSSL…VLSY), 749–772 (APSL…LLSQ), and 839–863 (TLSL…TLKP).

The protein belongs to the NLRP family. As to quaternary structure, homomultimer; forms the NLRP6 inflammasome polymeric complex, a filament composed of homopolymers in response to pathogens and other damage-associated signals. The core of NLRP6 inflammasomes consists of a signal sensor component (NLRP6), an adapter (PYCARD/ASC), which recruits effector pro-inflammatory caspases (CASP1 and CASP4). Interacts (via pyrin domain) with PYCARD/ASC (via pyrin domain); interaction takes place following NLRP6 activation and formation of liquid-liquid phase separation (LLPS), initiating nucleation which greatly enhances further addition of soluble PYCARD/ASC molecules to the speck in a prion-like polymerization process. Clustered PYCARD/ASC nucleates the formation of CASP1 (or possibly CASP4) filaments through the interaction of their respective CARD domains, acting as a platform for CASP1 polymerization. CASP1 filament formation increases local enzyme concentration, resulting in trans-autocleavage and activation. Active CASP1 then processes IL1B and IL18 precursors, leading to the release of mature cytokines in the extracellular milieu and inflammatory response. Interacts with DHX15. In terms of processing, polyubiquitinated with 'Lys-63'-linked chains, promoting the interaction with PYCARD/ASC and formation of the NLRP6 inflammasome. Deubiquitination by CYLD decreases the interaction with PYCARD/ASC. As to expression, detected in several tissues. Expressed in renal epithelial cells in medullary thick ascending limb of Henle, as well as in salivary gland apical epithelium (at protein level). Isoform 1 is widely expressed. Isoform 2 is primarily expressed in kidney (at protein level).

Its subcellular location is the cytoplasm. The protein resides in the inflammasome. It localises to the cell membrane. The protein localises to the nucleus membrane. Its function is as follows. Acts as the sensor component of the NLRP6 inflammasome, which mediates inflammasome activation in response to various pathogen-associated signals, leading to maturation and secretion of IL1B and IL18. Inflammasomes are supramolecular complexes that assemble in the cytosol in response to pathogens and other damage-associated signals and play critical roles in innate immunity and inflammation. Acts as a recognition receptor (PRR): recognizes and binds specific pathogens and other damage-associated signals, such as lipoteichoic acid (LTA), a cell-wall component of Gram-positive bacteria, or double stranded RNA (dsRNA). May also recognize and bind lipopolysaccharide (LPS), a major component of the outer membrane of Gram-negative bacteria; however, LPS is probably not a major activator of the NLRP6 inflammasome. Following LTA- or dsRNA-binding, NLRP6 undergoes liquid-liquid phase separation (LLPS), enhancing multivalent interactions, an essential step for the formation of the NLRP6 inflammasome polymeric complex. The NLRP6 inflammasome acts by promoting recruitment of effector pro-inflammatory caspases (CASP1 and/or CASP4) that catalyze maturation and secretion of IL1B and IL18 in the extracellular milieu. The NLRP6 inflammasome plays a central role in the maintenance of epithelial integrity and host defense against microbial infections in the intestine. Required to restrict infection against Gram-positive bacteria by recognizing lipoteichoic acid (LTA), leading to recruitment of CASP4 and CASP1, and subsequent maturation and secretion of IL1B and IL18. Involved in intestinal antiviral innate immunity together with DHX15: recognizes and binds viral dsRNA to restrict infection by enteric viruses through the interferon pathway and GSDMD-dependent release of IL18. Required to prevent infection by the apicomplexan parasite Cryptosporidium in enterocytes by promoting GSDMD-dependent release of IL18. The NLRP6 inflammasome may also regulate the gut microbiota composition by acting as a sensor of microbiota-associated metabolites to form a PYCARD/ASC-dependent inflammasome for downstream IL18 release and secretion of antimicrobial peptides. Essential for gut mucosal self-renewal and proliferation. Regulate mucus secretion in an inflammasome- and autophagy-dependent manner to prevent invasion by enteric bacteria,. During systemic bacterial infections, the NLRP6 inflammasome negatively regulates neutrophil recruitment and neutrophil extracellular traps (NETs) formation. May promote peripheral nerve recovery following injury via an inflammasome-independent mechanism. The polypeptide is NACHT, LRR and PYD domains-containing protein 6 (Rattus norvegicus (Rat)).